The sequence spans 611 residues: Depudecin biosynthesis cluster-specific transcription activator DEP6 (611 aa).

Residues 17–44 (CEICRQRKVRCDRALPRCRRCERLNQAC) constitute a DNA-binding region (zn(2)-C6 fungal-type). The interval 76 to 125 (DAPRGPASSMSSQSRSDSAAPAASRVPSVSASVPNSAATNPMDMVGTRSS) is disordered. The span at 78-113 (PRGPASSMSSQSRSDSAAPAASRVPSVSASVPNSAA) shows a compositional bias: low complexity.

Its subcellular location is the nucleus. Functionally, transcription factor that positively regulates the expression of the gene cluster that mediates the biosynthesis of depudecin, a highly oxidized eleven-carbon linear polyketide that acts as a histone deacetylase (HDAC) inhibitor and makes a small contribution to pathogenesis. This is Depudecin biosynthesis cluster-specific transcription activator DEP6 from Fusarium langsethiae.